A 427-amino-acid chain; its full sequence is Enolase (427 aa).

Glutamine 163 serves as a coordination point for (2R)-2-phosphoglycerate. Glutamate 205 functions as the Proton donor in the catalytic mechanism. Mg(2+) contacts are provided by aspartate 242, glutamate 285, and aspartate 312. Residues lysine 337, arginine 366, serine 367, and lysine 388 each contribute to the (2R)-2-phosphoglycerate site. Residue lysine 337 is the Proton acceptor of the active site.

Belongs to the enolase family. Requires Mg(2+) as cofactor.

The protein resides in the cytoplasm. Its subcellular location is the secreted. It localises to the cell surface. The enzyme catalyses (2R)-2-phosphoglycerate = phosphoenolpyruvate + H2O. It participates in carbohydrate degradation; glycolysis; pyruvate from D-glyceraldehyde 3-phosphate: step 4/5. In terms of biological role, catalyzes the reversible conversion of 2-phosphoglycerate (2-PG) into phosphoenolpyruvate (PEP). It is essential for the degradation of carbohydrates via glycolysis. The protein is Enolase of Nitrobacter hamburgensis (strain DSM 10229 / NCIMB 13809 / X14).